We begin with the raw amino-acid sequence, 317 residues long: MREKLFWILKKYGVSDHIAKAFLEIPREEFLTKSYPLSYVYEDIVLVSYDDGEEYSTSSQPSLMALFMEWVGLDKGMRVLEIGGGTGYNAAVMSRVVGEKGLVVSVEYSRKICEIAKRNVERLGIENVIFVCGDGYYGVPEFSPYDVIFVTVGVDEVPETWFTQLKEGGRVIVPINLKLSRRQPAFLFKKKDPYLVGNYKLETRFITAGGNLGNLLERNRKLLREFPFNREILLVRSHIFVELVDLLTRRLTEIDGTFYYAGPNGVVEFLDDRMRIYGDAPEIENLLTQWESCGYRSFEYLMLHVGYNAFSHISCSI.

Ser-59 is an active-site residue.

The protein belongs to the methyltransferase superfamily. L-isoaspartyl/D-aspartyl protein methyltransferase family. In terms of assembly, monomer.

Its subcellular location is the cytoplasm. The enzyme catalyses [protein]-L-isoaspartate + S-adenosyl-L-methionine = [protein]-L-isoaspartate alpha-methyl ester + S-adenosyl-L-homocysteine. Catalyzes the methyl esterification of L-isoaspartyl residues in peptides and proteins that result from spontaneous decomposition of normal L-aspartyl and L-asparaginyl residues. It plays a role in the repair and/or degradation of damaged proteins. In Thermotoga maritima (strain ATCC 43589 / DSM 3109 / JCM 10099 / NBRC 100826 / MSB8), this protein is Protein-L-isoaspartate O-methyltransferase (pcm).